The sequence spans 246 residues: Phosducin (246 aa).

Positions 1–14 are enriched in acidic residues; it reads MEEAASQSLEEDFE. A disordered region spans residues 1–70; that stretch reads MEEAASQSLE…DKDSKERMSR (70 aa). Positions 1 to 246 constitute a Phosducin domain; sequence MEEAASQSLE…QTNTEDEDIE (246 aa). Residues 58-69 show a composition bias toward basic and acidic residues; it reads SRDDKDSKERMS. Ser73 carries the post-translational modification Phosphoserine; by PKA. A thioredoxin fold region spans residues 111–246; the sequence is YGFVYELETG…QTNTEDEDIE (136 aa).

This sequence belongs to the phosducin family. In terms of assembly, interacts with CRX. Forms a complex with the beta and gamma subunits of the GTP-binding protein, transducin. Post-translationally, light-induced changes in cyclic nucleotide levels modulate the phosphorylation of this protein by cAMP kinase.

Its subcellular location is the cytoplasm. It is found in the cytosol. It localises to the nucleus. The protein resides in the cell projection. The protein localises to the cilium. Its subcellular location is the photoreceptor outer segment. It is found in the photoreceptor inner segment. Its function is as follows. Inhibits the transcriptional activation activity of the cone-rod homeobox CRX. May participate in the regulation of visual phototransduction or in the integration of photoreceptor metabolism. The polypeptide is Phosducin (Pdc) (Rattus norvegicus (Rat)).